The following is a 725-amino-acid chain: Manganese-exporting P-type ATPase (725 aa).

Residues 25-92 (GRMRIQIEWV…AISGAAHVAA (68 aa)) enclose the HMA domain. 6 helical membrane passes run 101–119 (HSSDIRNIEVLRMAIGAAA), 142–160 (LVASGVTIFTGYPFLRGAL), 165–179 (TGTDALVSVATIASL), 188–202 (LAVLWLLNIGEYLQD), 335–359 (VGENFSRCFVPTSFVVSAITLAITK), and 365–383 (MTVLLIACPCAVGLATPTA). Asp-416 functions as the 4-aspartylphosphate intermediate in the catalytic mechanism. Asp-416, Thr-418, and Asp-618 together coordinate Mg(2+). The next 2 membrane-spanning stretches (helical) occupy residues 669-688 (AVEVIRENYGMSIAVNAAGL) and 698-717 (PVLAAVLHNASSVAVVANSS).

This sequence belongs to the cation transport ATPase (P-type) (TC 3.A.3) family. Type IB subfamily.

The protein resides in the cell membrane. The enzyme catalyses Mn(2+)(in) + ATP + H2O = Mn(2+)(out) + ADP + phosphate + H(+). In terms of biological role, high affinity, slow turnover Mn(2+) transporting ATPase. This chain is Manganese-exporting P-type ATPase (ctpC), found in Mycobacterium leprae (strain TN).